Consider the following 171-residue polypeptide: Glutathione peroxidase-like peroxiredoxin GPX3 (171 aa).

Cys-43 (cysteine sulfenic acid (-SOH) intermediate) is an active-site residue. A disulfide bridge connects residues Cys-43 and Cys-89.

The protein belongs to the glutathione peroxidase family. As to quaternary structure, interacts with CAP1 and probably YBP1.

The enzyme catalyses a hydroperoxide + [thioredoxin]-dithiol = an alcohol + [thioredoxin]-disulfide + H2O. Its function is as follows. Involved in oxidative stress response and redox homeostasis. Functions as a sensor and transducer of hydroperoxide stress. In response to hydroperoxide stress it oxidizes (activates) the transcription activator CAP1, which is involved in transcription activation of genes of the oxidative stress response pathway. May also play a direct role in hydroperoxide scavenging. The enzyme is not required for the glutaredoxin-mediated antioxidant function. In the presence of peroxides, GPX3 is directly oxidized at Cys-43 to form a cysteine sulfenic acid (-SOH). Cys-43-SOH then forms either an intramolecular disulfide bond (Cys-43 with Cys-89) or a transient, intermolecular disulfide bond with 'Cys-446' of CAP1, which is further resolved into a CAP1 intramolecular disulfide bond ('Cys-303' with 'Cys-598'), which causes its nuclear accumulation and activation, and a reduced Cys-43 in GPX3. Required for C.albicans-mediated macrophage killing. The sequence is that of Glutathione peroxidase-like peroxiredoxin GPX3 from Candida albicans (strain SC5314 / ATCC MYA-2876) (Yeast).